The sequence spans 93 residues: Translation initiation factor IF-1 (93 aa).

Residues 1-72 (MAKEELIQFE…EKGRLIFRHK (72 aa)) enclose the S1-like domain. The interval 70 to 93 (RHKDERPGGGPPRGAPPRGQFRRR) is disordered.

This sequence belongs to the IF-1 family. Component of the 30S ribosomal translation pre-initiation complex which assembles on the 30S ribosome in the order IF-2 and IF-3, IF-1 and N-formylmethionyl-tRNA(fMet); mRNA recruitment can occur at any time during PIC assembly.

It localises to the cytoplasm. In terms of biological role, one of the essential components for the initiation of protein synthesis. Stabilizes the binding of IF-2 and IF-3 on the 30S subunit to which N-formylmethionyl-tRNA(fMet) subsequently binds. Helps modulate mRNA selection, yielding the 30S pre-initiation complex (PIC). Upon addition of the 50S ribosomal subunit IF-1, IF-2 and IF-3 are released leaving the mature 70S translation initiation complex. In Rhodopseudomonas palustris (strain BisB18), this protein is Translation initiation factor IF-1.